A 488-amino-acid polypeptide reads, in one-letter code: MSFNHKTIEELHDLLVAKEISATELTQKTLEDIKSREEAVGSFITVSEEAALRQAAAIDAKGIDADNLMSGIPLAVKDNISTKGILTTAASKMLYNYEPIFDATSVANAYAKDMIVIGKTNMDEFAMGGSTETSYFKKTKNAWDHTKVPGGSSGGSATAVASGQVRLSLGSDTGGSIRQPAAFNGVVGLKPTYGTVSRYGLIAFGSSLDQIGPFAPTVKENAQLLNVIASSDVKDATSAPVRIADYTSKIGRDIKGMKIALPKEYLGEGIDPEIKETVLAAAKQFEALGATVEEVSLPHSKYGVAVYYIIASSEASSNLQRFDGIRYGFRADDAKNLDEIYVNTRSQGFGDEVKRRIMLGTFSLSSGYYDAYFKKAGQVRTLIIQDFDKVFADYDLILGPTTPTVAFGLDTLNHDPVAMYLADLLTIPVNLAGLPGISIPAGFVDGLPVGLQLIGPKYAEETIYQAAAAFEAVTDYHKQQPIIFGGDK.

Residues lysine 77 and serine 152 each act as charge relay system in the active site. Serine 176 serves as the catalytic Acyl-ester intermediate.

It belongs to the amidase family. GatA subfamily. In terms of assembly, heterotrimer of A, B and C subunits.

It catalyses the reaction L-glutamyl-tRNA(Gln) + L-glutamine + ATP + H2O = L-glutaminyl-tRNA(Gln) + L-glutamate + ADP + phosphate + H(+). Functionally, allows the formation of correctly charged Gln-tRNA(Gln) through the transamidation of misacylated Glu-tRNA(Gln) in organisms which lack glutaminyl-tRNA synthetase. The reaction takes place in the presence of glutamine and ATP through an activated gamma-phospho-Glu-tRNA(Gln). The protein is Glutamyl-tRNA(Gln) amidotransferase subunit A of Streptococcus pyogenes serotype M6 (strain ATCC BAA-946 / MGAS10394).